A 287-amino-acid chain; its full sequence is Phosphatidylserine decarboxylase proenzyme (287 aa).

Residues Asp-89, His-146, and Ser-252 each act as charge relay system; for autoendoproteolytic cleavage activity in the active site. The active-site Schiff-base intermediate with substrate; via pyruvic acid; for decarboxylase activity is Ser-252. A Pyruvic acid (Ser); by autocatalysis modification is found at Ser-252.

This sequence belongs to the phosphatidylserine decarboxylase family. PSD-B subfamily. Prokaryotic type I sub-subfamily. Heterodimer of a large membrane-associated beta subunit and a small pyruvoyl-containing alpha subunit. Pyruvate is required as a cofactor. Is synthesized initially as an inactive proenzyme. Formation of the active enzyme involves a self-maturation process in which the active site pyruvoyl group is generated from an internal serine residue via an autocatalytic post-translational modification. Two non-identical subunits are generated from the proenzyme in this reaction, and the pyruvate is formed at the N-terminus of the alpha chain, which is derived from the carboxyl end of the proenzyme. The autoendoproteolytic cleavage occurs by a canonical serine protease mechanism, in which the side chain hydroxyl group of the serine supplies its oxygen atom to form the C-terminus of the beta chain, while the remainder of the serine residue undergoes an oxidative deamination to produce ammonia and the pyruvoyl prosthetic group on the alpha chain. During this reaction, the Ser that is part of the protease active site of the proenzyme becomes the pyruvoyl prosthetic group, which constitutes an essential element of the active site of the mature decarboxylase.

The protein resides in the cell membrane. It carries out the reaction a 1,2-diacyl-sn-glycero-3-phospho-L-serine + H(+) = a 1,2-diacyl-sn-glycero-3-phosphoethanolamine + CO2. It participates in phospholipid metabolism; phosphatidylethanolamine biosynthesis; phosphatidylethanolamine from CDP-diacylglycerol: step 2/2. Catalyzes the formation of phosphatidylethanolamine (PtdEtn) from phosphatidylserine (PtdSer). The polypeptide is Phosphatidylserine decarboxylase proenzyme (Shewanella sediminis (strain HAW-EB3)).